Here is a 587-residue protein sequence, read N- to C-terminus: General negative regulator of transcription subunit 4 (587 aa).

The segment at 33-78 (CPLCIEPMDITDKNFFPCPCGYQICQFCYNNIRQNPELNGRCPACR) adopts an RING-type zinc-finger fold. Positions 94–128 (EELKMERAKLARKEKERKHREKERKENEYTNRKHL) form a coiled coil. Residues 137–228 (NLVYVVGINP…YMDGRLIKAA (92 aa)) form the RRM domain. The C3H1-type zinc finger occupies 229 to 256 (YGTTKYCSSYLRGLPCPNPNCMFLHEPG). A Glycyl lysine isopeptide (Lys-Gly) (interchain with G-Cter in ubiquitin) cross-link involves residue Lys-270. A Phosphothreonine modification is found at Thr-310. Ser-312 carries the post-translational modification Phosphoserine. Position 326 is a phosphothreonine (Thr-326). Position 360 is a phosphoserine (Ser-360). Residues 370–412 (TLNDSLGHHTTPTTENTITSTTTTTNTNATSHSHGSKKKQSLA) are disordered. The segment covering 377–402 (HHTTPTTENTITSTTTTTNTNATSHS) has biased composition (low complexity).

In terms of assembly, forms a NOT protein complex that comprises NOT1, NOT2, NOT3, NOT4 and NOT5. Subunit of the 1.0 MDa CCR4-NOT core complex that contains CCR4, CAF1, NOT1, NOT2, NOT3, NOT4, NOT5, CAF40 and CAF130. In the complex interacts with NOT1. The core complex probably is part of a less characterized 1.9 MDa CCR4-NOT complex.

Its subcellular location is the cytoplasm. The protein localises to the nucleus. The enzyme catalyses S-ubiquitinyl-[E2 ubiquitin-conjugating enzyme]-L-cysteine + [acceptor protein]-L-lysine = [E2 ubiquitin-conjugating enzyme]-L-cysteine + N(6)-ubiquitinyl-[acceptor protein]-L-lysine.. It participates in protein modification; protein ubiquitination. Functionally, E3 ubiquitin-protein ligase component of the CCR4-NOT core complex, which in the nucleus seems to be a general transcription factor, and in the cytoplasm the major mRNA deadenylase involved in mRNA turnover. The NOT protein subcomplex negatively regulates the basal and activated transcription of many genes. Preferentially affects TC-type TATA element-dependent transcription. Could directly or indirectly inhibit component(s) of the general transcription machinery. In the cytoplasm, catalyzes monoubiquitination of RPS7/es7 in response to stalled ribosomes, initiating a HEL2-dependent response that activates the No-Go Decay (NGD) pathway. The polypeptide is General negative regulator of transcription subunit 4 (MOT2) (Saccharomyces cerevisiae (strain ATCC 204508 / S288c) (Baker's yeast)).